Consider the following 640-residue polypeptide: Chaperone protein DnaK (640 aa).

Thr-198 is subject to Phosphothreonine; by autocatalysis. The disordered stretch occupies residues 600–640 (KTQGAGAEGSEQPHGEQEAGGAAKGETVVDADFEEVKDDKK). Over residues 628–640 (VDADFEEVKDDKK) the composition is skewed to acidic residues.

This sequence belongs to the heat shock protein 70 family.

In terms of biological role, acts as a chaperone. This Geobacter sp. (strain M21) protein is Chaperone protein DnaK.